We begin with the raw amino-acid sequence, 790 residues long: Histone-lysine N-methyltransferase, H3 lysine-9 specific SUVH6 (790 aa).

The interval glutamine 251 to asparagine 271 is disordered. The segment covering glycine 256–serine 268 has biased composition (low complexity). One can recognise a YDG domain in the interval glycine 330 to arginine 482. Positions lysine 551–glycine 613 constitute a Pre-SET domain. Residues cysteine 553, cysteine 554, cysteine 555, cysteine 559, cysteine 567, cysteine 569, cysteine 595, cysteine 599, cysteine 601, and cysteine 605 each coordinate Zn(2+). One can recognise an SET domain in the interval leucine 616–asparagine 760. S-adenosyl-L-methionine is bound by residues arginine 626 to tryptophan 628, aspartate 662, tyrosine 664, arginine 714, and asparagine 717 to histidine 718. Residues cysteine 720, cysteine 778, cysteine 780, and cysteine 785 each coordinate Zn(2+). The region spanning lysine 774–tyrosine 790 is the Post-SET domain.

The protein belongs to the class V-like SAM-binding methyltransferase superfamily. Histone-lysine methyltransferase family. Suvar3-9 subfamily.

The protein resides in the nucleus. Its subcellular location is the chromosome. It localises to the centromere. The catalysed reaction is N(6)-methyl-L-lysyl(9)-[histone H3] + S-adenosyl-L-methionine = N(6),N(6)-dimethyl-L-lysyl(9)-[histone H3] + S-adenosyl-L-homocysteine + H(+). It catalyses the reaction L-lysyl(9)-[histone H3] + S-adenosyl-L-methionine = N(6)-methyl-L-lysyl(9)-[histone H3] + S-adenosyl-L-homocysteine + H(+). Histone methyltransferase. Methylates 'Lys-9' of histone H3. H3 'Lys-9' methylation represents a specific tag for epigenetic transcriptional repression. Seems to act preferentially on dsMRNA. This chain is Histone-lysine N-methyltransferase, H3 lysine-9 specific SUVH6 (SUVH6), found in Arabidopsis thaliana (Mouse-ear cress).